The following is a 124-amino-acid chain: Large ribosomal subunit protein bL12 (124 aa).

This sequence belongs to the bacterial ribosomal protein bL12 family. In terms of assembly, homodimer. Part of the ribosomal stalk of the 50S ribosomal subunit. Forms a multimeric L10(L12)X complex, where L10 forms an elongated spine to which 2 to 4 L12 dimers bind in a sequential fashion. Binds GTP-bound translation factors.

Its function is as follows. Forms part of the ribosomal stalk which helps the ribosome interact with GTP-bound translation factors. Is thus essential for accurate translation. This Borreliella burgdorferi (strain ATCC 35210 / DSM 4680 / CIP 102532 / B31) (Borrelia burgdorferi) protein is Large ribosomal subunit protein bL12.